Here is a 163-residue protein sequence, read N- to C-terminus: ATP synthase subunit delta, mitochondrial (163 aa).

A mitochondrion-targeting transit peptide spans 1–18; that stretch reads MLARTIQRFSVVAKRGYA.

This sequence belongs to the ATPase epsilon chain family. Subunit of the F-type ATPase which has 2 components, CF(1) - the catalytic core - and CF(0) - the membrane proton channel.

It is found in the mitochondrion. Its subcellular location is the mitochondrion inner membrane. Mitochondrial membrane ATP synthase (F(1)F(0) ATP synthase or Complex V) produces ATP from ADP in the presence of a proton gradient across the membrane which is generated by electron transport complexes of the respiratory chain. F-type ATPases consist of two structural domains, F(1) - containing the extramembraneous catalytic core, and F(0) - containing the membrane proton channel, linked together by a central stalk and a peripheral stalk. During catalysis, ATP turnover in the catalytic domain of F(1) is coupled via a rotary mechanism of the central stalk subunits to proton translocation. Part of the complex F(1) domain and of the central stalk which is part of the complex rotary element. The polypeptide is ATP synthase subunit delta, mitochondrial (Caenorhabditis elegans).